The primary structure comprises 47 residues: Large ribosomal subunit protein bL34 (47 aa).

Belongs to the bacterial ribosomal protein bL34 family.

The protein is Large ribosomal subunit protein bL34 of Rhodococcus erythropolis (strain PR4 / NBRC 100887).